We begin with the raw amino-acid sequence, 344 residues long: MTIILAIETSCDETAVAIVNNNLVLSSVVSSQIDLHRLYGGVVPEMASRQHLETINFCLEKAWQETGLNWSEIDGIAATVAPGLVGALMVGMTAAKTLAIVHDKPFIGIHHLEGHIYASYLAESDLKPPFLSLLVSGGHTSLIHVQACGKYQQLGTTRDDAAGEAFDKVARLLNLSYPGGPIIDRMAKDGNPQAFPLPEGKISLPTGGFHAYDSSFSGLKTAVLRLVEKFEPDNLPVADIAASFQDTVARSLTRRTINCALDYGLKTIAIGGGVAANSALRNHLETAAKNHHLTVYFPPLKLCTDNAAMIARAAVDHYDLGHFSDLSIGVRSRLPLSEVMQLYK.

Fe cation contacts are provided by H111 and H115. Residues 134–138 (LVSGG), D167, G180, D184, and N277 contribute to the substrate site. D305 contacts Fe cation.

Belongs to the KAE1 / TsaD family. Requires Fe(2+) as cofactor.

It localises to the cytoplasm. It catalyses the reaction L-threonylcarbamoyladenylate + adenosine(37) in tRNA = N(6)-L-threonylcarbamoyladenosine(37) in tRNA + AMP + H(+). Required for the formation of a threonylcarbamoyl group on adenosine at position 37 (t(6)A37) in tRNAs that read codons beginning with adenine. Is involved in the transfer of the threonylcarbamoyl moiety of threonylcarbamoyl-AMP (TC-AMP) to the N6 group of A37, together with TsaE and TsaB. TsaD likely plays a direct catalytic role in this reaction. The protein is tRNA N6-adenosine threonylcarbamoyltransferase of Microcystis aeruginosa (strain NIES-843 / IAM M-2473).